The chain runs to 24 residues: Retinol-binding protein 3 (24 aa).

It is found in the secreted. Its subcellular location is the extracellular space. The protein resides in the extracellular matrix. The protein localises to the interphotoreceptor matrix. IRBP shuttles 11-cis and all trans retinoids between the retinol isomerase in the pigment epithelium and the visual pigments in the photoreceptor cells of the retina. The chain is Retinol-binding protein 3 (RBP3) from Ovis aries (Sheep).